We begin with the raw amino-acid sequence, 477 residues long: Serine/threonine protein phosphatase 2A 55 kDa regulatory subunit B' delta isoform (477 aa).

Belongs to the phosphatase 2A regulatory subunit B56 family. As to quaternary structure, PP2A consists of a common heteromeric enzyme, composed of a catalytic subunit (subunits C), a constant regulatory subunit (subunit A), and a variety of regulatory subunits such as subunits B (the R2/B/PR55/B55, R3/B''/PR72/PR130/PR59 and R5/B'/B56 families). Interacts with SRK2E/OST1. In terms of tissue distribution, expressed ubiquitously.

It localises to the cytoplasm. Functionally, the B regulatory subunit may modulate substrate selectivity and catalytic activity, and may also direct the localization of the catalytic enzyme to a particular subcellular compartment. This Arabidopsis thaliana (Mouse-ear cress) protein is Serine/threonine protein phosphatase 2A 55 kDa regulatory subunit B' delta isoform (B'DELTA).